The chain runs to 438 residues: RING finger protein 150 (438 aa).

The first 34 residues, 1-34 (MAMSLIQACCSLALSTWLLSFCFVHLLCLDFTVA), serve as a signal peptide directing secretion. Residues 35 to 208 (EKEEWYTAFV…NLQKYVSRTS (174 aa)) lie on the Extracellular side of the membrane. Residues Asn45, Asn125, Asn153, and Asn186 are each glycosylated (N-linked (GlcNAc...) asparagine). In terms of domain architecture, PA spans 81–183 (SPKQDARGEV…PKGKEIVSLL (103 aa)). The chain crosses the membrane as a helical span at residues 209-229 (VVFVSISFIVLMIISLAWLVF). The Cytoplasmic portion of the chain corresponds to 230–438 (YYIQRFRYAN…TDQDCEEVKS (209 aa)). Residues 278-319 (CAVCIEGYKPNDVVRILPCRHLFHKSCVDPWLLDHRTCPMCK) form an RING-type; atypical zinc finger.

It is found in the membrane. The chain is RING finger protein 150 (RNF150) from Homo sapiens (Human).